The following is a 298-amino-acid chain: Ribosomal RNA small subunit methyltransferase A (298 aa).

The S-adenosyl-L-methionine site is built by Asn-35, Leu-37, Gly-62, Glu-83, Asp-108, and Asn-133.

This sequence belongs to the class I-like SAM-binding methyltransferase superfamily. rRNA adenine N(6)-methyltransferase family. RsmA subfamily.

It is found in the cytoplasm. The catalysed reaction is adenosine(1518)/adenosine(1519) in 16S rRNA + 4 S-adenosyl-L-methionine = N(6)-dimethyladenosine(1518)/N(6)-dimethyladenosine(1519) in 16S rRNA + 4 S-adenosyl-L-homocysteine + 4 H(+). Functionally, specifically dimethylates two adjacent adenosines (A1518 and A1519) in the loop of a conserved hairpin near the 3'-end of 16S rRNA in the 30S particle. May play a critical role in biogenesis of 30S subunits. This is Ribosomal RNA small subunit methyltransferase A from Streptococcus pyogenes serotype M12 (strain MGAS9429).